A 621-amino-acid polypeptide reads, in one-letter code: Transmembrane protein 200C (621 aa).

The interval 12 to 37 (ARKQDPLRPPSQIPKRKRKAKKRRKN) is disordered. A compositionally biased stretch (basic residues) spans 25–36 (PKRKRKAKKRRK). A helical membrane pass occupies residues 53–73 (GLIALCGILVLLVGIAMAVVG). Residues 80 to 147 (GTNREGGKQL…RAASPSSSST (68 aa)) are disordered. A compositionally biased stretch (low complexity) spans 125–147 (SSSAGAPRSTPPARAASPSSSST). The chain crosses the membrane as a helical span at residues 167-187 (VFGPLIMGIGIFLFICANAVL). 3 disordered regions span residues 284–315 (WPPH…PREP), 347–368 (ASSC…QSTA), and 384–598 (LQGG…FTNK). Over residues 290–303 (APSGGRPRGAASPP) the composition is skewed to low complexity. Positions 405–418 (PGERGSQEIPRGEL) are enriched in basic and acidic residues. A compositionally biased stretch (pro residues) spans 479–490 (RAPPSPEPPPSP). Composition is skewed to low complexity over residues 491–505 (GSAD…KAAS) and 523–533 (GSSQSDDPSSS). Residues 586 to 595 (EQPQPVQRQF) are compositionally biased toward polar residues.

This sequence belongs to the TMEM200 family.

It is found in the membrane. This chain is Transmembrane protein 200C (TMEM200C), found in Homo sapiens (Human).